A 368-amino-acid chain; its full sequence is Quinolinate synthase (368 aa).

The iminosuccinate site is built by His-46 and Ser-63. Position 110 (Cys-110) interacts with [4Fe-4S] cluster. Residues 141–143 (YVN) and Ser-162 each bind iminosuccinate. Cys-230 contributes to the [4Fe-4S] cluster binding site. Residues 256–258 (HPE) and Thr-273 each bind iminosuccinate. Residue Cys-320 coordinates [4Fe-4S] cluster.

It belongs to the quinolinate synthase family. Type 3 subfamily. The cofactor is [4Fe-4S] cluster.

The protein resides in the cytoplasm. The enzyme catalyses iminosuccinate + dihydroxyacetone phosphate = quinolinate + phosphate + 2 H2O + H(+). Its pathway is cofactor biosynthesis; NAD(+) biosynthesis; quinolinate from iminoaspartate: step 1/1. In terms of biological role, catalyzes the condensation of iminoaspartate with dihydroxyacetone phosphate to form quinolinate. The protein is Quinolinate synthase of Bacillus thuringiensis subsp. konkukian (strain 97-27).